Here is a 156-residue protein sequence, read N- to C-terminus: Arginine repressor (156 aa).

Belongs to the ArgR family.

It localises to the cytoplasm. It functions in the pathway amino-acid biosynthesis; L-arginine biosynthesis [regulation]. Functionally, regulates arginine biosynthesis genes. The polypeptide is Arginine repressor (Sodalis glossinidius (strain morsitans)).